The primary structure comprises 147 residues: MGLPAQLPVTLLCLLAGTAHFIQGRRGDIILPEVIKTLNILTERKTPCTKLMIADALAVPKNTTEREAVCRAATALRQFYLHHKVSWCFKEHGELGDLRLLRGLDRNLCSMAKLSNCPGKEARQTTLEDFLDRLKTAMQEKYSKRQS.

The N-terminal stretch at 1–24 is a signal peptide; sequence MGLPAQLPVTLLCLLAGTAHFIQG. Residues cysteine 48 and cysteine 88 are joined by a disulfide bond. The N-linked (GlcNAc...) asparagine glycan is linked to asparagine 62.

It belongs to the IL-4/IL-13 family.

The protein localises to the secreted. Its function is as follows. Participates in at least several B-cell activation processes as well as of other cell types. It is a costimulator of DNA-synthesis. It induces the expression of class II MHC molecules on resting B-cells. It enhances both secretion and cell surface expression of IgE and IgG1. It also regulates the expression of the low affinity Fc receptor for IgE (CD23) on both lymphocytes and monocytes. Positively regulates IL31RA expression in macrophages. Stimulates autophagy in dendritic cells by interfering with mTORC1 signaling and through the induction of RUFY4. This is Interleukin-4 (IL4) from Oryctolagus cuniculus (Rabbit).